The primary structure comprises 308 residues: Olfactory receptor 2D2 (308 aa).

Residues 1–25 lie on the Extracellular side of the membrane; that stretch reads MRQINQTQVTEFLLLGLSDGPHTEQ. Asparagine 5 carries an N-linked (GlcNAc...) asparagine glycan. The helical transmembrane segment at 26-49 threads the bilayer; the sequence is LLFIVLLGVYLVTVLGNLLLISLV. Over 50 to 57 the chain is Cytoplasmic; sequence HVDSQLHT. Residues 58-79 traverse the membrane as a helical segment; sequence PMYFFLCNLSLADLCFSTNIVP. Residues 80–100 lie on the Extracellular side of the membrane; sequence QALVHLLSRKKVIAFTLCAAR. A helical transmembrane segment spans residues 101–120; that stretch reads LLFFLIFGCTQCALLAVMSY. Topologically, residues 121 to 139 are cytoplasmic; it reads DRYVAICNPLRYPNIMTWK. The helical transmembrane segment at 140 to 158 threads the bilayer; the sequence is VCVQLATGSWTSGILVSVV. Over 159–195 the chain is Extracellular; the sequence is DTTFILRLPYRGSNSIAHFFCEAPALLILASTDTHAS. A helical membrane pass occupies residues 196–219; sequence EMAIFLMGVVILLIPVFLILVSYG. At 220–236 the chain is on the cytoplasmic side; the sequence is RIIVTVVKMKSTVGSLK. Residues 237 to 259 form a helical membrane-spanning segment; it reads AFSTCGSHLMVVILFYGSAIITY. Over 260–270 the chain is Extracellular; that stretch reads MTPKSSKQQEK. Residues 271–290 form a helical membrane-spanning segment; it reads SVSVFYAIVTPMLNPLIYSL. The Cytoplasmic portion of the chain corresponds to 291 to 308; sequence RNKDVKAALRKVATRNFP.

It belongs to the G-protein coupled receptor 1 family.

It is found in the cell membrane. In terms of biological role, odorant receptor. This Homo sapiens (Human) protein is Olfactory receptor 2D2 (OR2D2).